We begin with the raw amino-acid sequence, 361 residues long: [LysW]-lysine hydrolase (361 aa).

Histidine 67 is a binding site for Zn(2+). Aspartate 69 is an active-site residue. Residue aspartate 91 coordinates Zn(2+). The active-site Proton acceptor is the glutamate 124. 3 residues coordinate Zn(2+): glutamate 125, glutamate 148, and histidine 326.

Belongs to the peptidase M20A family. LysK subfamily. As to quaternary structure, homotetramer and homooctamer. The cofactor is Zn(2+). Co(2+) is required as a cofactor.

The protein resides in the cytoplasm. The catalysed reaction is [amino-group carrier protein]-C-terminal-gamma-(L-lysyl)-L-glutamate + H2O = [amino-group carrier protein]-C-terminal-L-glutamate + L-lysine. It functions in the pathway amino-acid biosynthesis; L-lysine biosynthesis via AAA pathway; L-lysine from L-alpha-aminoadipate (Thermus route): step 5/5. Its function is as follows. Catalyzes the release of L-lysine from [LysW]-gamma-L-lysine. In vitro, can deacetylate both N(2)-acetyl-L-lysine and N(2)-acetyl-L-ornithine. The sequence is that of [LysW]-lysine hydrolase from Thermus thermophilus (strain ATCC BAA-163 / DSM 7039 / HB27).